Consider the following 134-residue polypeptide: Holo-[acyl-carrier-protein] synthase (134 aa).

Positions 8 and 56 each coordinate Mg(2+).

The protein belongs to the P-Pant transferase superfamily. AcpS family. Mg(2+) is required as a cofactor.

The protein localises to the cytoplasm. It catalyses the reaction apo-[ACP] + CoA = holo-[ACP] + adenosine 3',5'-bisphosphate + H(+). Its function is as follows. Transfers the 4'-phosphopantetheine moiety from coenzyme A to a Ser of acyl-carrier-protein. This is Holo-[acyl-carrier-protein] synthase from Clostridium kluyveri (strain ATCC 8527 / DSM 555 / NBRC 12016 / NCIMB 10680 / K1).